The primary structure comprises 593 residues: Methylenetetrahydrofolate reductase (NADH) 1 (593 aa).

Glu21 serves as the catalytic Proton donor/acceptor. NAD(+) contacts are provided by residues 21-26 (EYFPPK) and 52-53 (TW). Residues 52–53 (TW), His81, 111–113 (RGD), Tyr153, 157–160 (HPDA), Asp175, and Lys182 each bind FAD. Asp113 serves as a coordination point for substrate. Gln193 and Tyr285 together coordinate substrate.

This sequence belongs to the methylenetetrahydrofolate reductase family. In terms of assembly, homodimer. Requires FAD as cofactor.

It carries out the reaction (6S)-5-methyl-5,6,7,8-tetrahydrofolate + NAD(+) = (6R)-5,10-methylene-5,6,7,8-tetrahydrofolate + NADH + H(+). It functions in the pathway one-carbon metabolism; tetrahydrofolate interconversion. Plant MTHFRs strongly prefer NADH over NADPH. Not inhibited by methionine or S-adenosylmethionine. Functionally, the probable reversibility of the MTHFR reaction in plants suggests that they can metabolize the methyl group of 5,10-methylenetetrahydrofolate to serine, sugars and starch. The polypeptide is Methylenetetrahydrofolate reductase (NADH) 1 (Zea mays (Maize)).